We begin with the raw amino-acid sequence, 466 residues long: UDP-N-acetylmuramoylalanine--D-glutamate ligase (466 aa).

121–127 (GTNGKST) serves as a coordination point for ATP.

It belongs to the MurCDEF family.

It is found in the cytoplasm. It carries out the reaction UDP-N-acetyl-alpha-D-muramoyl-L-alanine + D-glutamate + ATP = UDP-N-acetyl-alpha-D-muramoyl-L-alanyl-D-glutamate + ADP + phosphate + H(+). The protein operates within cell wall biogenesis; peptidoglycan biosynthesis. Its function is as follows. Cell wall formation. Catalyzes the addition of glutamate to the nucleotide precursor UDP-N-acetylmuramoyl-L-alanine (UMA). This Bradyrhizobium diazoefficiens (strain JCM 10833 / BCRC 13528 / IAM 13628 / NBRC 14792 / USDA 110) protein is UDP-N-acetylmuramoylalanine--D-glutamate ligase.